We begin with the raw amino-acid sequence, 197 residues long: Imidazoleglycerol-phosphate dehydratase (197 aa).

Belongs to the imidazoleglycerol-phosphate dehydratase family.

Its subcellular location is the cytoplasm. The catalysed reaction is D-erythro-1-(imidazol-4-yl)glycerol 3-phosphate = 3-(imidazol-4-yl)-2-oxopropyl phosphate + H2O. Its pathway is amino-acid biosynthesis; L-histidine biosynthesis; L-histidine from 5-phospho-alpha-D-ribose 1-diphosphate: step 6/9. This Azorhizobium caulinodans (strain ATCC 43989 / DSM 5975 / JCM 20966 / LMG 6465 / NBRC 14845 / NCIMB 13405 / ORS 571) protein is Imidazoleglycerol-phosphate dehydratase.